The chain runs to 464 residues: Putative guanine nucleotide-binding protein subunit alpha (464 aa).

Residues 33–415 (HSKLKRGDGP…ETKRDKYNEK (383 aa)) form the G-alpha domain. Residues 36–49 (LKRGDGPGESGKST) are G1 motif. GTP contacts are provided by residues 41–48 (GPGESGKS), 147–151 (DVGGQ), 214–220 (LRSRTKT), 239–243 (DVGGQ), 268–271 (RNRD), and 310–313 (TSQS). Residue Ser-48 coordinates Mg(2+). The interval 212–220 (DVLRSRTKT) is G2 motif. Residue Thr-220 coordinates Mg(2+). Positions 235-244 (FRMVDVGGQR) are G3 motif. Residues 306–313 (VMFLTSQS) are G4 motif. Positions 382 to 387 (GYSGTC) are G5 motif.

This sequence in the N-terminal section; belongs to the G-alpha family. The protein in the C-terminal section; belongs to the class-II aminoacyl-tRNA synthetase family. In terms of assembly, g proteins are composed of 3 units; alpha, beta and gamma. The alpha chain contains the guanine nucleotide binding site.

Guanine nucleotide-binding proteins (G proteins) are involved as modulators or transducers in various transmembrane signaling systems. The chain is Putative guanine nucleotide-binding protein subunit alpha from Leishmania donovani.